We begin with the raw amino-acid sequence, 93 residues long: Protamine-3 (93 aa).

Residues 1-93 (MGSRCAKLGT…QSPEPKQTRS (93 aa)) are disordered. The segment covering 37–57 (EGEEEEEGEEEEEEEGEEEEL) has biased composition (acidic residues). Residues 81 to 93 (EVQQSPEPKQTRS) show a composition bias toward polar residues. Phosphoserine is present on serine 85.

Belongs to the protamine P3 family.

The protein resides in the nucleus. It localises to the chromosome. In terms of biological role, protamines substitute for histones in the chromatin of sperm during the haploid phase of spermatogenesis. They compact sperm DNA into a highly condensed, stable and inactive complex. The protein is Protamine-3 (PRM3) of Bos taurus (Bovine).